A 130-amino-acid chain; its full sequence is Encapsulin nanocompartment cargo protein EncC (130 aa).

Fe cation is bound by residues Glu31, Glu61, and His64. The short motif at 61–64 (EREH) is the Di-iron-binding motif element. Residues 103–130 (EAVGKEGAAPSPADVTPEKRLTVGSLRR) are disordered. Residues 123 to 130 (LTVGSLRR) form a probable targeting peptide region.

It belongs to the ferritin-like superfamily.

Its subcellular location is the encapsulin nanocompartment. Functionally, cargo protein of a type 1 encapsulin nanocompartment. May help nucleate Fe atoms in the interior of the encapsulin nanocompartment. Present in about 92 copies/encapsulin nanocompartment. In Myxococcus xanthus (strain DK1622), this protein is Encapsulin nanocompartment cargo protein EncC.